Consider the following 59-residue polypeptide: Potassium channel toxin alpha-KTx 15.5 (59 aa).

The N-terminal stretch at 1–22 (MKFSSIILLTLLICSMSIFGNC) is a signal peptide. The residue at position 23 (glutamine 23) is a Pyrrolidone carboxylic acid. 3 cysteine pairs are disulfide-bonded: cysteine 30–cysteine 50, cysteine 35–cysteine 55, and cysteine 39–cysteine 57.

This sequence belongs to the short scorpion toxin superfamily. Potassium channel inhibitor family. Alpha-KTx 15 subfamily. In terms of tissue distribution, expressed by the venom gland.

The protein resides in the secreted. Its function is as follows. Blocker of A-type voltage-gated potassium channels of cerebellar granular cells. May also inhibit Kv4/KCND when coexpressed with DPP6 or DPP10. The occlusion of the outer entry of the K(+) conducting pore is partially reversible and affects both open and closed channels. It shares the same target in rat brain than BmTX3 (AC Q8I0L5) and AmmTX3 (AC P60208). The sequence is that of Potassium channel toxin alpha-KTx 15.5 from Androctonus australis (Sahara scorpion).